We begin with the raw amino-acid sequence, 352 residues long: N-acetyl-gamma-glutamyl-phosphate reductase (352 aa).

Cys-155 is an active-site residue.

This sequence belongs to the NAGSA dehydrogenase family. Type 1 subfamily.

It localises to the cytoplasm. It carries out the reaction N-acetyl-L-glutamate 5-semialdehyde + phosphate + NADP(+) = N-acetyl-L-glutamyl 5-phosphate + NADPH + H(+). It functions in the pathway amino-acid biosynthesis; L-arginine biosynthesis; N(2)-acetyl-L-ornithine from L-glutamate: step 3/4. Catalyzes the NADPH-dependent reduction of N-acetyl-5-glutamyl phosphate to yield N-acetyl-L-glutamate 5-semialdehyde. The protein is N-acetyl-gamma-glutamyl-phosphate reductase of Cyanothece sp. (strain PCC 7425 / ATCC 29141).